Reading from the N-terminus, the 276-residue chain is Small ribosomal subunit protein uS2 (276 aa).

Disordered regions lie at residues 209–233 and 252–276; these read AQEA…AADV and VDWS…SSWE. Residues 211 to 231 show a composition bias toward low complexity; the sequence is EAAAAAQAAKETAEPTTEGAA.

It belongs to the universal ribosomal protein uS2 family. As to quaternary structure, component of the small ribosomal subunit. Mature ribosomes consist of a small (40S) and a large (60S) subunit. The 40S subunit contains about 33 different proteins and 1 molecule of RNA (18S). The 60S subunit contains about 49 different proteins and 3 molecules of RNA (25S, 5.8S and 5S). Interacts with RPS21.

The protein localises to the cytoplasm. Functionally, required for the assembly and/or stability of the 40S ribosomal subunit. Required for the processing of the 20S rRNA-precursor to mature 18S rRNA in a late step of the maturation of 40S ribosomal subunits. This is Small ribosomal subunit protein uS2 from Mycosarcoma maydis (Corn smut fungus).